Reading from the N-terminus, the 413-residue chain is Serine hydroxymethyltransferase (413 aa).

(6S)-5,6,7,8-tetrahydrofolate-binding positions include leucine 117 and 121-123 (GHL). The residue at position 226 (lysine 226) is an N6-(pyridoxal phosphate)lysine. (6S)-5,6,7,8-tetrahydrofolate contacts are provided by residues glutamate 239 and 349–351 (SPF).

This sequence belongs to the SHMT family. As to quaternary structure, homodimer. Pyridoxal 5'-phosphate serves as cofactor.

The protein resides in the cytoplasm. The catalysed reaction is (6R)-5,10-methylene-5,6,7,8-tetrahydrofolate + glycine + H2O = (6S)-5,6,7,8-tetrahydrofolate + L-serine. It functions in the pathway one-carbon metabolism; tetrahydrofolate interconversion. The protein operates within amino-acid biosynthesis; glycine biosynthesis; glycine from L-serine: step 1/1. In terms of biological role, catalyzes the reversible interconversion of serine and glycine with tetrahydrofolate (THF) serving as the one-carbon carrier. This reaction serves as the major source of one-carbon groups required for the biosynthesis of purines, thymidylate, methionine, and other important biomolecules. Also exhibits THF-independent aldolase activity toward beta-hydroxyamino acids, producing glycine and aldehydes, via a retro-aldol mechanism. This is Serine hydroxymethyltransferase from Bacillus cereus (strain G9842).